A 109-amino-acid chain; its full sequence is Nucleoid-associated protein LBUL_1514 (109 aa).

This sequence belongs to the YbaB/EbfC family. As to quaternary structure, homodimer.

The protein localises to the cytoplasm. Its subcellular location is the nucleoid. Functionally, binds to DNA and alters its conformation. May be involved in regulation of gene expression, nucleoid organization and DNA protection. The sequence is that of Nucleoid-associated protein LBUL_1514 from Lactobacillus delbrueckii subsp. bulgaricus (strain ATCC BAA-365 / Lb-18).